A 453-amino-acid polypeptide reads, in one-letter code: Flap endonuclease 1 (453 aa).

Positions 1–105 (MGIKGLTGLL…SVLAKRFARR (105 aa)) are N-domain. Aspartate 34 contributes to the Mg(2+) binding site. 2 residues coordinate DNA: arginine 47 and arginine 71. Residues aspartate 87, glutamate 159, glutamate 161, aspartate 180, and aspartate 182 each contribute to the Mg(2+) site. The interval 123–254 (DVDKLARRQV…KTALKLMREH (132 aa)) is I-domain. Residue glutamate 159 participates in DNA binding. DNA is bound by residues glycine 232 and aspartate 234. Position 234 (aspartate 234) interacts with Mg(2+). 2 disordered regions span residues 273-336 (EEIK…VASS) and 409-453 (RLDG…KSKN). The span at 320 to 333 (KSPKKKAPAKKKKV) shows a compositional bias: basic residues. The interaction with PCNA stretch occupies residues 406-414 (QQGRLDGFF). Over residues 417–446 (KPKEPAAKDTGKGKGKATKGEKRKAEEKGS) the composition is skewed to basic and acidic residues.

Belongs to the XPG/RAD2 endonuclease family. FEN1 subfamily. As to quaternary structure, interacts with PCNA. Three molecules of FEN1 bind to one PCNA trimer with each molecule binding to one PCNA monomer. PCNA stimulates the nuclease activity without altering cleavage specificity. Requires Mg(2+) as cofactor. In terms of processing, phosphorylated. Phosphorylation upon DNA damage induces relocalization to the nuclear plasma.

The protein localises to the nucleus. It is found in the nucleolus. Its subcellular location is the nucleoplasm. The protein resides in the mitochondrion. Structure-specific nuclease with 5'-flap endonuclease and 5'-3' exonuclease activities involved in DNA replication and repair. During DNA replication, cleaves the 5'-overhanging flap structure that is generated by displacement synthesis when DNA polymerase encounters the 5'-end of a downstream Okazaki fragment. It enters the flap from the 5'-end and then tracks to cleave the flap base, leaving a nick for ligation. Also involved in the long patch base excision repair (LP-BER) pathway, by cleaving within the apurinic/apyrimidinic (AP) site-terminated flap. Acts as a genome stabilization factor that prevents flaps from equilibrating into structures that lead to duplications and deletions. Also possesses 5'-3' exonuclease activity on nicked or gapped double-stranded DNA, and exhibits RNase H activity. Also involved in replication and repair of rDNA and in repairing mitochondrial DNA. The polypeptide is Flap endonuclease 1 (Cryptococcus neoformans var. neoformans serotype D (strain B-3501A) (Filobasidiella neoformans)).